The following is a 461-amino-acid chain: Bifunctional protein GlmU (461 aa).

The pyrophosphorylase stretch occupies residues 1-235; sequence MKAIILAAGL…ITEIFGVNDR (235 aa). UDP-N-acetyl-alpha-D-glucosamine contacts are provided by residues 6 to 9, K20, Q71, and 77 to 78; these read LAAG and GT. Residue D102 coordinates Mg(2+). UDP-N-acetyl-alpha-D-glucosamine is bound by residues G145, E160, N175, and N233. Residue N233 participates in Mg(2+) binding. A linker region spans residues 236-256; it reads WELSFAESVIKMRILENLARS. Positions 257-461 are N-acetyltransferase; the sequence is GVTIHSPESV…LEDKSKVKDE (205 aa). R339 and K357 together coordinate UDP-N-acetyl-alpha-D-glucosamine. H369 functions as the Proton acceptor in the catalytic mechanism. Positions 372 and 383 each coordinate UDP-N-acetyl-alpha-D-glucosamine. Residues A386, S411, G429, and R446 each contribute to the acetyl-CoA site.

The protein in the N-terminal section; belongs to the N-acetylglucosamine-1-phosphate uridyltransferase family. It in the C-terminal section; belongs to the transferase hexapeptide repeat family. Homotrimer. Mg(2+) serves as cofactor.

It localises to the cytoplasm. The catalysed reaction is alpha-D-glucosamine 1-phosphate + acetyl-CoA = N-acetyl-alpha-D-glucosamine 1-phosphate + CoA + H(+). It catalyses the reaction N-acetyl-alpha-D-glucosamine 1-phosphate + UTP + H(+) = UDP-N-acetyl-alpha-D-glucosamine + diphosphate. The protein operates within nucleotide-sugar biosynthesis; UDP-N-acetyl-alpha-D-glucosamine biosynthesis; N-acetyl-alpha-D-glucosamine 1-phosphate from alpha-D-glucosamine 6-phosphate (route II): step 2/2. Its pathway is nucleotide-sugar biosynthesis; UDP-N-acetyl-alpha-D-glucosamine biosynthesis; UDP-N-acetyl-alpha-D-glucosamine from N-acetyl-alpha-D-glucosamine 1-phosphate: step 1/1. It functions in the pathway bacterial outer membrane biogenesis; LPS lipid A biosynthesis. Catalyzes the last two sequential reactions in the de novo biosynthetic pathway for UDP-N-acetylglucosamine (UDP-GlcNAc). The C-terminal domain catalyzes the transfer of acetyl group from acetyl coenzyme A to glucosamine-1-phosphate (GlcN-1-P) to produce N-acetylglucosamine-1-phosphate (GlcNAc-1-P), which is converted into UDP-GlcNAc by the transfer of uridine 5-monophosphate (from uridine 5-triphosphate), a reaction catalyzed by the N-terminal domain. The protein is Bifunctional protein GlmU of Hydrogenobaculum sp. (strain Y04AAS1).